We begin with the raw amino-acid sequence, 1374 residues long: Serine/threonine-protein kinase LMTK1 (1374 aa).

A helical membrane pass occupies residues 32-52 (LAVVAVSFSGLFAVIVLMLAC). The region spanning 125 to 395 (LLYLKEIGRG…PTAEEVHLLL (271 aa)) is the Protein kinase domain. Residues 131-139 (IGRGWFGKV) and K156 contribute to the ATP site. The Proton acceptor role is filled by D253. S495 carries the phosphoserine modification. Disordered stretches follow at residues 542–622 (GHDP…LAEG), 667–731 (VGAR…LLGL), 765–1195 (WTET…PAVP), 1245–1302 (QESP…AWDD), and 1320–1374 (AAPA…SKEA). Over residues 606 to 620 (PSRSPSPSAGPLSLA) the composition is skewed to low complexity. The span at 680–690 (SNVSANNNSGS) shows a compositional bias: polar residues. Composition is skewed to low complexity over residues 719–731 (PEPG…LLGL), 801–831 (SPSQ…TPAT), and 847–856 (SSSSPEVEAP). Polar residues predominate over residues 865–878 (EATSGIFTDTSSDG). A compositionally biased stretch (low complexity) spans 900–914 (PDSLDSLDIPSSASD). Residues 978 to 987 (RLSTSLSGLN) are compositionally biased toward polar residues. S1029 is modified (phosphoserine). Residues 1063–1073 (EGSSPEPSTCP) are compositionally biased toward polar residues. A compositionally biased stretch (low complexity) spans 1138-1155 (TPRAPLRLALPGLPAALE). Over residues 1158 to 1173 (PEEEEEDSEDSDESDE) the composition is skewed to acidic residues. 5 positions are modified to phosphoserine: S1168, S1171, S1184, S1187, and S1262. Residues 1272 to 1291 (GSPSAPNRPQQADGSPNGST) show a composition bias toward polar residues. Over residues 1321-1332 (APAPAAPTPTPA) the composition is skewed to pro residues. A compositionally biased stretch (polar residues) spans 1337–1352 (FTVSPAPTSRFSITHV). Residues 1353–1363 (SDSDAESKRGP) show a composition bias toward basic and acidic residues. Positions 1365 to 1374 (AGAGGESKEA) are enriched in gly residues.

The protein belongs to the protein kinase superfamily. Tyr protein kinase family. Interacts with CDK5. Autophosphorylated. Phosphorylated by CDK5. Expressed in brain.

It localises to the membrane. The protein localises to the cytoplasm. Its subcellular location is the perinuclear region. It carries out the reaction L-seryl-[protein] + ATP = O-phospho-L-seryl-[protein] + ADP + H(+). It catalyses the reaction L-threonyl-[protein] + ATP = O-phospho-L-threonyl-[protein] + ADP + H(+). Functionally, may be involved in neuronal differentiation. The chain is Serine/threonine-protein kinase LMTK1 (AATK) from Homo sapiens (Human).